The primary structure comprises 261 residues: Histone H3-like centromeric protein cpar-1 (261 aa).

Residues 80–150 form a disordered region; the sequence is TVGSNSTNLV…AGSSSSDRVR (71 aa). Over residues 113–127 the composition is skewed to polar residues; that stretch reads AANSHHQSPINVGNR. Low complexity predominate over residues 132 to 146; that stretch reads GTNGRNGSRAGSSSS. The H3-like stretch occupies residues 164-261; it reads YRPGQKALEE…LYRRLCLPNL (98 aa).

This sequence belongs to the histone H3 family. In terms of assembly, forms a nucleosome-like histone octamer containing two molecules each of H2A, H2B, cpar-1 and H4 assembled in one cpar-1-H4 heterotetramer and two H2A-H2B heterodimers. In terms of processing, cleaved at the onset of meiotic anaphase I, likely by separase sep-1.

It is found in the nucleus. Its subcellular location is the chromosome. Functionally, histone H3-like variant which exclusively replaces conventional H3 in the nucleosome core of centromeric chromatin at the inner plate of the kinetochore. Required for recruitment and assembly of kinetochore proteins, mitotic progression and chromosome segregation. May serve as an epigenetic mark that propagates centromere identity through replication and cell division. Not required for chromosome segregation during meiosis. This is Histone H3-like centromeric protein cpar-1 from Caenorhabditis elegans.